Reading from the N-terminus, the 471-residue chain is MGSFPCPQKIEQVLLSGQGLNELSFASRPACASMLVERVPHHGVVYGLGQETAVAQPNLPEGFDFTDPDVYAERIPYQEFAELRKTAPIWWNPQPPEIGGFHDDGYWVVSKLEDVKEVSRRSDVFSTHENTAIVRFADDIPRENIEMQRFILINKDAPEHTKLRKLVSRGFTPRAINSLREELTERAEKIVKEAAESGAGDFVTQVACELPLQAIAELLGVPQEDRLKVFDWSNQMTGYDDPELDIDPQAASMEILGYAYQMADERKKCPADDIVTTLIEADIDGNELSPEEFGFFVILLAVAGNETTRNAITHGMMAFLDHPDQWELYKKERPKTTADEIVRWATPVNSFQRTALEDTELGGVQIKKGQRVVMLYGSANFDEDAFENPEKFDIMRENNPHVGFGGTGAHFCLGANLARLEIDLIFNAIADHLPDISKLGDPRRLRSGWLNGIKEFQVDYKTASGGCPVRH.

Glycine 238 is a binding site for substrate. Cysteine 412 contributes to the heme binding site.

Belongs to the cytochrome P450 family. It depends on heme as a cofactor.

The catalysed reaction is cholest-4-en-3-one + 6 reduced [2Fe-2S]-[ferredoxin] + 3 O2 + 5 H(+) = (25S)-3-oxocholest-4-en-26-oate + 6 oxidized [2Fe-2S]-[ferredoxin] + 4 H2O. Functionally, involved in the utilization of cholesterol as the sole carbon and energy source by degrading the side chain. Primarily catalyzes the sequential oxidation of the terminal methyl of cholest-4-en-3-one into (25S)-26-hydroxycholest-4-en-3-one (alcohol), (25S)-26-oxocholest-4-en-3-one (aldehyde), to finally yield the carboxylic acid (25S)-3-oxocholest-4-en-26-oate. Also able to sequentially oxidize cholesterol itself, not only cholest-4-en-3-one. The sequence is that of Steroid C26-monooxygenase (cyp125) from Rhodococcus jostii (strain RHA1).